The primary structure comprises 178 residues: Acireductone dioxygenase (178 aa).

Histidine 81, histidine 83, glutamate 87, and histidine 126 together coordinate Fe(2+). Histidine 81, histidine 83, glutamate 87, and histidine 126 together coordinate Ni(2+).

Belongs to the acireductone dioxygenase (ARD) family. It depends on Fe(2+) as a cofactor. The cofactor is Ni(2+).

It localises to the cytoplasm. The protein localises to the nucleus. It catalyses the reaction 1,2-dihydroxy-5-(methylsulfanyl)pent-1-en-3-one + O2 = 4-methylsulfanyl-2-oxobutanoate + formate + 2 H(+). The catalysed reaction is 1,2-dihydroxy-5-(methylsulfanyl)pent-1-en-3-one + O2 = 3-(methylsulfanyl)propanoate + CO + formate + 2 H(+). It participates in amino-acid biosynthesis; L-methionine biosynthesis via salvage pathway; L-methionine from S-methyl-5-thio-alpha-D-ribose 1-phosphate: step 5/6. In terms of biological role, catalyzes 2 different reactions between oxygen and the acireductone 1,2-dihydroxy-3-keto-5-methylthiopentene (DHK-MTPene) depending upon the metal bound in the active site. Fe-containing acireductone dioxygenase (Fe-ARD) produces formate and 2-keto-4-methylthiobutyrate (KMTB), the alpha-ketoacid precursor of methionine in the methionine recycle pathway. Ni-containing acireductone dioxygenase (Ni-ARD) produces methylthiopropionate, carbon monoxide and formate, and does not lie on the methionine recycle pathway. This chain is Acireductone dioxygenase (adi1), found in Neurospora crassa (strain ATCC 24698 / 74-OR23-1A / CBS 708.71 / DSM 1257 / FGSC 987).